A 330-amino-acid chain; its full sequence is Aspartate--ammonia ligase (330 aa).

This sequence belongs to the class-II aminoacyl-tRNA synthetase family. AsnA subfamily.

The protein localises to the cytoplasm. It carries out the reaction L-aspartate + NH4(+) + ATP = L-asparagine + AMP + diphosphate + H(+). The protein operates within amino-acid biosynthesis; L-asparagine biosynthesis; L-asparagine from L-aspartate (ammonia route): step 1/1. In Shigella flexneri serotype 5b (strain 8401), this protein is Aspartate--ammonia ligase.